The chain runs to 78 residues: Small ribosomal subunit protein bS18 (78 aa).

Belongs to the bacterial ribosomal protein bS18 family. As to quaternary structure, part of the 30S ribosomal subunit. Forms a tight heterodimer with protein bS6.

Binds as a heterodimer with protein bS6 to the central domain of the 16S rRNA, where it helps stabilize the platform of the 30S subunit. The protein is Small ribosomal subunit protein bS18 of Pediococcus pentosaceus (strain ATCC 25745 / CCUG 21536 / LMG 10740 / 183-1w).